The sequence spans 228 residues: uncharacterized protein (228 aa).

Positions 1–19 are cleaved as a signal peptide; sequence MYRYTWLLWWITILLRIQQ. N-linked (GlcNAc...) asparagine; by host glycans are attached at residues Asn-41, Asn-93, Asn-100, Asn-128, and Asn-164. The helical transmembrane segment at 189–209 threads the bilayer; that stretch reads MWIIPLVIVTTIIVLICFKFP.

Belongs to the HHV-5 UL9 family.

The protein resides in the host membrane. This is an uncharacterized protein from Homo sapiens (Human).